Here is a 414-residue protein sequence, read N- to C-terminus: 2,3-bisphosphoglycerate-independent phosphoglycerate mutase (414 aa).

Belongs to the BPG-independent phosphoglycerate mutase family. A-PGAM subfamily.

The catalysed reaction is (2R)-2-phosphoglycerate = (2R)-3-phosphoglycerate. The protein operates within carbohydrate degradation; glycolysis; pyruvate from D-glyceraldehyde 3-phosphate: step 3/5. Functionally, catalyzes the interconversion of 2-phosphoglycerate and 3-phosphoglycerate. The polypeptide is 2,3-bisphosphoglycerate-independent phosphoglycerate mutase (Saccharolobus islandicus (strain M.14.25 / Kamchatka #1) (Sulfolobus islandicus)).